The following is an 883-amino-acid chain: Valine--tRNA ligase (883 aa).

The 'HIGH' region motif lies at 46–56 (PNVTGKLHLGH). The short motif at 520-524 (KMSKS) is the 'KMSKS' region element. Lysine 523 is an ATP binding site. Residues 809–883 (LADLLNVEEE…RIKEMEKLIK (75 aa)) are a coiled coil.

It belongs to the class-I aminoacyl-tRNA synthetase family. ValS type 1 subfamily. As to quaternary structure, monomer.

It localises to the cytoplasm. It carries out the reaction tRNA(Val) + L-valine + ATP = L-valyl-tRNA(Val) + AMP + diphosphate. In terms of biological role, catalyzes the attachment of valine to tRNA(Val). As ValRS can inadvertently accommodate and process structurally similar amino acids such as threonine, to avoid such errors, it has a 'posttransfer' editing activity that hydrolyzes mischarged Thr-tRNA(Val) in a tRNA-dependent manner. In Streptococcus mutans serotype c (strain ATCC 700610 / UA159), this protein is Valine--tRNA ligase.